A 1070-amino-acid polypeptide reads, in one-letter code: DNA-directed RNA polymerase subunit beta (1070 aa).

Belongs to the RNA polymerase beta chain family. As to quaternary structure, in plastids the minimal PEP RNA polymerase catalytic core is composed of four subunits: alpha, beta, beta', and beta''. When a (nuclear-encoded) sigma factor is associated with the core the holoenzyme is formed, which can initiate transcription.

It is found in the plastid. It localises to the chloroplast. It carries out the reaction RNA(n) + a ribonucleoside 5'-triphosphate = RNA(n+1) + diphosphate. In terms of biological role, DNA-dependent RNA polymerase catalyzes the transcription of DNA into RNA using the four ribonucleoside triphosphates as substrates. The polypeptide is DNA-directed RNA polymerase subunit beta (Citrus sinensis (Sweet orange)).